The following is a 288-amino-acid chain: Polyamine aminopropyltransferase (288 aa).

In terms of domain architecture, PABS spans 9-238; the sequence is ETLHDQFGQY…GIMTFAWATD (230 aa). S-methyl-5'-thioadenosine is bound at residue Gln33. Spermidine is bound by residues His64 and Asp88. S-methyl-5'-thioadenosine-binding positions include Glu108 and 140–141; that span reads DG. The active-site Proton acceptor is the Asp158. A spermidine-binding site is contributed by 158–161; that stretch reads DCTD. An S-methyl-5'-thioadenosine-binding site is contributed by Pro165.

It belongs to the spermidine/spermine synthase family. As to quaternary structure, homodimer or homotetramer.

The protein localises to the cytoplasm. The catalysed reaction is S-adenosyl 3-(methylsulfanyl)propylamine + putrescine = S-methyl-5'-thioadenosine + spermidine + H(+). Its pathway is amine and polyamine biosynthesis; spermidine biosynthesis; spermidine from putrescine: step 1/1. In terms of biological role, catalyzes the irreversible transfer of a propylamine group from the amino donor S-adenosylmethioninamine (decarboxy-AdoMet) to putrescine (1,4-diaminobutane) to yield spermidine. This chain is Polyamine aminopropyltransferase, found in Escherichia coli (strain UTI89 / UPEC).